The following is a 232-amino-acid chain: LexA repressor (232 aa).

Positions 26 to 46 form a DNA-binding region, H-T-H motif; the sequence is FDEMKDALDLRSKSGIHRLIT. Residues Ser153 and Lys191 each act as for autocatalytic cleavage activity in the active site.

This sequence belongs to the peptidase S24 family. As to quaternary structure, homodimer.

The catalysed reaction is Hydrolysis of Ala-|-Gly bond in repressor LexA.. In terms of biological role, represses a number of genes involved in the response to DNA damage (SOS response), including recA and lexA. In the presence of single-stranded DNA, RecA interacts with LexA causing an autocatalytic cleavage which disrupts the DNA-binding part of LexA, leading to derepression of the SOS regulon and eventually DNA repair. This chain is LexA repressor, found in Bradyrhizobium sp. (strain ORS 278).